Reading from the N-terminus, the 371-residue chain is Putative glutamate--cysteine ligase 2 (371 aa).

The protein belongs to the glutamate--cysteine ligase type 2 family. YbdK subfamily.

The enzyme catalyses L-cysteine + L-glutamate + ATP = gamma-L-glutamyl-L-cysteine + ADP + phosphate + H(+). Functionally, ATP-dependent carboxylate-amine ligase which exhibits weak glutamate--cysteine ligase activity. The sequence is that of Putative glutamate--cysteine ligase 2 from Burkholderia multivorans (strain ATCC 17616 / 249).